The sequence spans 2507 residues: Putative neurobeachin homolog (2507 aa).

3 disordered regions span residues 1 to 109 (MEIS…PPLP), 1307 to 1377 (PSSP…DGGR), and 1629 to 1649 (SRHE…EISE). Residues 24 to 37 (PVEEGEEVNDEESN) show a composition bias toward acidic residues. Over residues 1317 to 1340 (TTQKQENSENVNSETSPENGSNGK) the composition is skewed to polar residues. Positions 1360–1372 (DGEEEENGEEGQG) are enriched in acidic residues. A BEACH-type PH domain is found at 1690–1798 (PSSQSACFST…AVKKVVYQLP (109 aa)). Positions 1817–2106 (MTPRQLFKHS…QLLTEAHPPR (290 aa)) constitute a BEACH domain. WD repeat units follow at residues 2265-2308 (GHGD…GFIA), 2326-2365 (GHEA…LRRI), 2405-2444 (LVDD…KLYT), and 2447-2486 (PLNS…WHYE).

This sequence belongs to the WD repeat neurobeachin family. In terms of assembly, interacts with RII subunit of PKA. As to expression, expressed in vulval precursor cells and rectal epithelia in L2 and L3 larvae. In L4 larvae, expression is seen in intestinal epithelial cells.

The protein resides in the cytoplasm. It localises to the membrane. It is found in the nucleus. Binds to type II regulatory subunits of protein kinase A and anchors/targets them to the membrane. May anchor the kinase to cytoskeletal and/or organelle-associated proteins. Regulates endosomal traffic in polarized epithelial cells such as the vulval precursor cells and intestinal cells. Thought to act as a negative regulator of lin-12 activity in vulval precursor cells. May have a role in the internalization process from basolateral surface of polarized epithelial cells. In Caenorhabditis elegans, this protein is Putative neurobeachin homolog (sel-2).